The following is a 176-amino-acid chain: Avian agnoprotein 1a (176 aa).

Disordered regions lie at residues 1-85 and 116-176; these read MSTP…GKLE and VYAA…RPAR. Positions 75 to 85 are enriched in basic and acidic residues; that stretch reads YDRQNRFGKLE. The stretch at 76-119 forms a coiled coil; sequence DRQNRFGKLESEIRETKSQLETLRQELKHLQADVDDLKETVYAA. Residues 137–161 show a composition bias toward low complexity; sequence TPTATTPEASPAAPTTESTETTGPS.

In terms of assembly, interacts with VP1.

Its subcellular location is the virion. The protein resides in the host nucleus. This Budgerigar fledgling disease virus (BFPyV) protein is Avian agnoprotein 1a.